Here is a 2400-residue protein sequence, read N- to C-terminus: Retinitis pigmentosa 1-like 1 protein (2400 aa).

Doublecortin domains follow at residues Lys-34 to Arg-118 and Arg-152 to Lys-231. Disordered stretches follow at residues Cys-104–Arg-152, Met-230–Lys-310, Gly-444–Ala-1064, Ala-1188–Glu-1251, Glu-1275–Glu-1501, and Arg-1697–Phe-2400. A compositionally biased stretch (polar residues) spans Ser-242–Gly-251. A compositionally biased stretch (pro residues) spans Arg-277–Pro-287. Over residues Gln-450–Gly-460 the composition is skewed to polar residues. Low complexity-rich tracts occupy residues Gly-530–Glu-543 and Asp-573–Leu-584. Over residues Ala-591–Ala-601 the composition is skewed to polar residues. 2 stretches are compositionally biased toward low complexity: residues Ser-625 to Gly-637 and Ala-645 to Pro-654. Residues Pro-661–Tyr-670 show a composition bias toward basic residues. Polar residues-rich tracts occupy residues Thr-711–Val-740 and Cys-825–Gln-835. 3 stretches are compositionally biased toward low complexity: residues Gln-864–Thr-880, Pro-903–Gly-921, and Ser-941–Pro-953. 2 stretches are compositionally biased toward polar residues: residues Leu-1223 to Arg-1238 and Ala-1285 to Glu-1299. A 1-1; approximate repeat occupies Leu-1292–Lys-1307. The tract at residues Leu-1292–Lys-1342 is 3 X 16 AA approximate tandem repeats of T-E-E-G-L-Q-E-E-G-V-Q-L-E-E-T-K. Residues Thr-1310–Lys-1326 form a 1-2; approximate repeat. Residues Thr-1327 to Lys-1342 form a 1-3 repeat. The span at Gly-1346–Gly-1363 shows a compositional bias: acidic residues. The span at Arg-1434–Glu-1445 shows a compositional bias: low complexity. Composition is skewed to polar residues over residues Thr-1460 to Gln-1472 and Glu-1489 to Glu-1501. Positions Ala-1726–Gln-1736 are enriched in gly residues. Composition is skewed to basic and acidic residues over residues Leu-1752–Glu-1762 and Ala-1769–Asn-1778. 3 consecutive repeat copies span residues Glu-1836 to Val-1851, Glu-1852 to Ala-1867, and Glu-1875 to Val-1890. Composition is skewed to acidic residues over residues Glu-1836–Pro-1909 and Glu-1920–Gln-1948. The segment at Glu-1836–Glu-2244 is 25 X 16 AA approximate tandem repeats of [ED]-[AT]-[PQ]-[ED]-[AVT]-E-[GKE]-[ED]-[AMT]-Q-[EPK]-[EAT]-[TSELP]-[EG]-[EGSQDI]-[AVIE]. One copy of the 2-4; approximate repeat lies at Glu-1891–Ala-1906. The 2-5 repeat unit spans residues Glu-1907–Ser-1921. The stretch at Glu-1923–Ala-1938 is one 2-6; approximate repeat. The stretch at Glu-1934 to Gln-2017 forms a coiled coil. A 2-7 repeat occupies Glu-1939–Thr-1954. Over residues Glu-1949–Ser-1958 the composition is skewed to low complexity. A 2-8; approximate repeat occupies Gln-1955 to Ala-1970. 4 stretches are compositionally biased toward acidic residues: residues Glu-1959–Gly-2022, Ala-2048–Glu-2075, Glu-2083–Gly-2108, and Glu-2117–Thr-2245. One copy of the 2-9; approximate repeat lies at Gln-1971–Val-1984. 2 consecutive repeat copies span residues Glu-1985–Val-2000 and Glu-2001–Ala-2016. One copy of the 2-12; approximate repeat lies at Gln-2017–Gly-2031. Residues Glu-2033–Ala-2048 form a 2-13d repeat. The stretch at Gly-2054–Glu-2081 forms a coiled coil. The 2-14 repeat unit spans residues Glu-2056–Val-2071. Residues Gln-2072–Val-2085 form a 2-15; approximate repeat. 10 repeat units span residues Asp-2086–Val-2101, Glu-2102–Ile-2116, Glu-2117–Ile-2132, Glu-2133–Val-2148, Glu-2149–Ile-2164, Glu-2165–Val-2180, Glu-2181–Ile-2196, Glu-2197–Val-2212, Glu-2213–Val-2228, and Glu-2229–Glu-2244. The segment covering Pro-2292–Asn-2308 has biased composition (polar residues). Residues Lys-2312 to Asp-2327 are compositionally biased toward basic and acidic residues.

Interacts with RP1; has a synergistic effect with RP1 in photoreceptor differentiation. In terms of tissue distribution, retinal-specific; expressed in photoreceptor.

The protein resides in the cytoplasm. It localises to the cytoskeleton. It is found in the cilium axoneme. Its subcellular location is the cell projection. The protein localises to the cilium. The protein resides in the photoreceptor outer segment. Its function is as follows. Required for the differentiation of photoreceptor cells. Plays a role in the organization of outer segment of rod and cone photoreceptors. The protein is Retinitis pigmentosa 1-like 1 protein (RP1L1) of Homo sapiens (Human).